A 1448-amino-acid chain; its full sequence is Probable serine/threonine-protein kinase irlB (1448 aa).

Acidic residues predominate over residues 412–423 (DDDDYDDYDDDD). Residues 412-446 (DDDDYDDYDDDDDHHSGCNNNNNNNNDGDHNEDEN) form a disordered region. Positions 428 to 437 (GCNNNNNNNN) are enriched in low complexity. Coiled coils occupy residues 666 to 817 (AESE…EIQN), 887 to 921 (EIQL…SNMK), and 974 to 1016 (ENNK…QDED). The disordered stretch occupies residues 975 to 1008 (NNKKQNLINDNNNNNNNNNNNNNNNNNNNNNNKL). Low complexity predominate over residues 978–1008 (KQNLINDNNNNNNNNNNNNNNNNNNNNNNKL). The Protein kinase domain occupies 1027–1293 (RNESNILGRG…IQNVLNHPLF (267 aa)). ATP-binding positions include 1033 to 1041 (LGRGSNGTL) and Lys-1056. Asp-1151 serves as the catalytic Proton acceptor. In terms of domain architecture, KEN spans 1296–1448 (LEKKIQFIDA…TIDYLFNFYN (153 aa)).

The protein belongs to the protein kinase superfamily. Ser/Thr protein kinase family.

The catalysed reaction is L-seryl-[protein] + ATP = O-phospho-L-seryl-[protein] + ADP + H(+). The enzyme catalyses L-threonyl-[protein] + ATP = O-phospho-L-threonyl-[protein] + ADP + H(+). This chain is Probable serine/threonine-protein kinase irlB (irlB-1), found in Dictyostelium discoideum (Social amoeba).